An 85-amino-acid chain; its full sequence is MAHKKGVGSSRNGRDSDGQRLGCKKFGGEAVKAGNIIYRQHGTKIHPGNNVGLGKDYTLFALIEGVVKFERMGKDRKKVSVYPAN.

The interval 1 to 21 is disordered; sequence MAHKKGVGSSRNGRDSDGQRL.

Belongs to the bacterial ribosomal protein bL27 family.

The polypeptide is Large ribosomal subunit protein bL27 (Citrifermentans bemidjiense (strain ATCC BAA-1014 / DSM 16622 / JCM 12645 / Bem) (Geobacter bemidjiensis)).